The sequence spans 151 residues: Ribonuclease H (151 aa).

In terms of domain architecture, RNase H type-1 spans 1–146; sequence MSDLFAYTDG…ADELARAGMA (146 aa). Residues D9, E52, D74, and D138 each contribute to the Mg(2+) site.

This sequence belongs to the RNase H family. As to quaternary structure, monomer. Mg(2+) serves as cofactor.

The protein localises to the cytoplasm. It catalyses the reaction Endonucleolytic cleavage to 5'-phosphomonoester.. Its function is as follows. Endonuclease that specifically degrades the RNA of RNA-DNA hybrids. This chain is Ribonuclease H, found in Cereibacter sphaeroides (strain ATCC 17025 / ATH 2.4.3) (Rhodobacter sphaeroides).